The primary structure comprises 323 residues: tRNA dimethylallyltransferase (323 aa).

12-19 contacts ATP; it reads GPTAAGKT. 14–19 contacts substrate; the sequence is TAAGKT. Interaction with substrate tRNA regions lie at residues 37–40 and 161–165; these read DSAL and QRLIR.

This sequence belongs to the IPP transferase family. Monomer. Requires Mg(2+) as cofactor.

It carries out the reaction adenosine(37) in tRNA + dimethylallyl diphosphate = N(6)-dimethylallyladenosine(37) in tRNA + diphosphate. In terms of biological role, catalyzes the transfer of a dimethylallyl group onto the adenine at position 37 in tRNAs that read codons beginning with uridine, leading to the formation of N6-(dimethylallyl)adenosine (i(6)A). The sequence is that of tRNA dimethylallyltransferase from Pseudomonas putida (strain W619).